A 525-amino-acid chain; its full sequence is Bifunctional purine biosynthesis protein PurH (525 aa).

An MGS-like domain is found at 1-148 (MPSNNLIKNA…KNYKNVIVIV (148 aa)).

Belongs to the PurH family.

The catalysed reaction is (6R)-10-formyltetrahydrofolate + 5-amino-1-(5-phospho-beta-D-ribosyl)imidazole-4-carboxamide = 5-formamido-1-(5-phospho-D-ribosyl)imidazole-4-carboxamide + (6S)-5,6,7,8-tetrahydrofolate. The enzyme catalyses IMP + H2O = 5-formamido-1-(5-phospho-D-ribosyl)imidazole-4-carboxamide. It participates in purine metabolism; IMP biosynthesis via de novo pathway; 5-formamido-1-(5-phospho-D-ribosyl)imidazole-4-carboxamide from 5-amino-1-(5-phospho-D-ribosyl)imidazole-4-carboxamide (10-formyl THF route): step 1/1. Its pathway is purine metabolism; IMP biosynthesis via de novo pathway; IMP from 5-formamido-1-(5-phospho-D-ribosyl)imidazole-4-carboxamide: step 1/1. This is Bifunctional purine biosynthesis protein PurH from Buchnera aphidicola subsp. Acyrthosiphon pisum (strain APS) (Acyrthosiphon pisum symbiotic bacterium).